We begin with the raw amino-acid sequence, 761 residues long: uncharacterized protein (761 aa).

Methionine 1 carries the post-translational modification N-acetylmethionine. Disordered stretches follow at residues 1–82, 229–320, and 590–640; these read MEHQ…SSSS, SNII…SALA, and FNRA…PEQQ. Residues 13 to 27 show a composition bias toward polar residues; that stretch reads NSGSNRVTVYNGTTL. Over residues 28-45 the composition is skewed to low complexity; it reads PTMPKSATPTSSSTTVTT. Polar residues-rich tracts occupy residues 244-259, 266-276, 590-604, and 627-640; these read TPVS…SSPE, NTTSSSSTSDH, FNRA…STDD, and SKNS…PEQQ.

In terms of processing, phosphorylated by CDC28.

This is an uncharacterized protein from Saccharomyces cerevisiae (strain ATCC 204508 / S288c) (Baker's yeast).